Reading from the N-terminus, the 1088-residue chain is MTLFRQNSALPNFLDSQRDSFRYFLETGIREELDFFSPIVGQSLGSSSKRPTDRFISVSFHSKDFYFKKPHYTPQEAVQKLGTYKSSLIVPVHVYSKYLNLNATFPVAFCDLPLMTEHGTFILNGSPRVIVHQIVRCPGVYLKPQFDKQGNRTHLVSFLSAYGSWLRFETDKKGVVFAHIDNLRKVPVTVFLQALGFSMDTIVGALKYPEALDPTLKEVDWKLTTDEAILLLMSRLFPNRPATVLRGRKFLFNQFFNPRRYSLSDVGRKRVNQKFRMRSKTKHLTLTPQDALAALDYLLRCENGETEFLDDIDHLKNRRARLAGELIQTQFRLGLNRLERVIYNRISDENILRKTPGALGSLNSLIRTQVLASVFQEFFGSNQLSQFMDQTNPLAEITHKRRLSSLGPGGLNRDRAGLIVRGIHPSYYGRICPIETPEGKNAGLVGSIATFTQINKNGFLESPYYKLISESNTPDRNGFFLLSAFYEEDTVVAQGDVDLSNFRIPTRNKSQFTENTVQEINFLGLCPIQFMSIATSLIPFLEHDDANRALMGSNMQRQAVSLLRSERPFVGTGLEAHVTRDIGATIVAKQNSYISYVDAQRIDYFTPVIGDTNLIDYQNLTAEDVFASNQFKHNTIWLTSYQRSNQDTCLNHKPLVEANTWVEAGDCLADNAATAKGELALGRNILIGYMPWEGYNFEDAVLVSERLVYDDVFTSIHISRYEVSTARLREGQEYFTNQVDRNQYLDEFGVVKIGTWVEAGDVLVGKISPQPDSDNDPESRLLRAIFGGVARNTKTTSYCLSSGVSGRILDVRCEFKRQTKNIEDESIESTGSVYVYLVEKRRLQVGDKVAGRHGNKGIVSNILPRVDMPYLQSGKALDMVLNPLGVPSRMNVGQIFECLLGLAANTLKQNFKVLPFDEMHGAEVSRGFVYHYLYKSRLLTQQKWLFKPNSPGKSIVFDGRTGLNFDQPVTVGYPYILKLVHLVDDKIHARSTGPYSLVTQQPLGGRSKKGGQRLGEMEVWALEGFGAAYVLQELLTIKSDDMIGRNRAFMSMIRGTLLPKSGIPESFKVLVSELRGLCLDMSIARINF.

It belongs to the RNA polymerase beta chain family. In terms of assembly, in plastids the minimal PEP RNA polymerase catalytic core is composed of four subunits: alpha, beta, beta', and beta''. When a (nuclear-encoded) sigma factor is associated with the core the holoenzyme is formed, which can initiate transcription.

Its subcellular location is the plastid. The protein resides in the chloroplast. It catalyses the reaction RNA(n) + a ribonucleoside 5'-triphosphate = RNA(n+1) + diphosphate. Functionally, DNA-dependent RNA polymerase catalyzes the transcription of DNA into RNA using the four ribonucleoside triphosphates as substrates. The protein is DNA-directed RNA polymerase subunit beta of Ostreococcus tauri.